The sequence spans 322 residues: GDSL esterase/lipase At5g03600 (322 aa).

Ser21 (nucleophile) is an active-site residue. Catalysis depends on residues Asp295 and His298.

It belongs to the 'GDSL' lipolytic enzyme family.

The protein is GDSL esterase/lipase At5g03600 of Arabidopsis thaliana (Mouse-ear cress).